The following is a 439-amino-acid chain: Coiled-coil domain-containing protein 166 (439 aa).

Residues 1–28 (MAPKKKRGPSAGSQPGGAAAAGAEQPLS) form a disordered region. The span at 9-23 (PSAGSQPGGAAAAGA) shows a compositional bias: low complexity. Coiled-coil stretches lie at residues 27–74 (LSER…EENR) and 121–213 (DGVR…VRAL). The tract at residues 276–439 (PGGPPLWERP…AAAEASPGRA (164 aa)) is disordered. The span at 338–365 (VLSSMDSRVPSLATSKVGSRMPSLTASR) shows a compositional bias: polar residues. Low complexity-rich tracts occupy residues 376–392 (SLEG…RVSS) and 428–439 (AEAAAEASPGRA).

This is Coiled-coil domain-containing protein 166 (CCDC166) from Homo sapiens (Human).